The primary structure comprises 196 residues: Holliday junction branch migration complex subunit RuvA (196 aa).

The tract at residues 1 to 63 is domain I; it reads MYDYIKGILT…EDAHLLYGFA (63 aa). Residues 64–142 form a domain II region; the sequence is TENEKSVFLS…MSEEAGPVQQ (79 aa). The interval 142–146 is flexible linker; the sequence is QVAPS. A domain III region spans residues 147-196; the sequence is SENIALEEAMEAMEALGYRPAELKKIKKFFEGTNDTAENYIKSALKMLMK.

It belongs to the RuvA family. As to quaternary structure, homotetramer. Forms an RuvA(8)-RuvB(12)-Holliday junction (HJ) complex. HJ DNA is sandwiched between 2 RuvA tetramers; dsDNA enters through RuvA and exits via RuvB. An RuvB hexamer assembles on each DNA strand where it exits the tetramer. Each RuvB hexamer is contacted by two RuvA subunits (via domain III) on 2 adjacent RuvB subunits; this complex drives branch migration. In the full resolvosome a probable DNA-RuvA(4)-RuvB(12)-RuvC(2) complex forms which resolves the HJ.

It is found in the cytoplasm. In terms of biological role, the RuvA-RuvB-RuvC complex processes Holliday junction (HJ) DNA during genetic recombination and DNA repair, while the RuvA-RuvB complex plays an important role in the rescue of blocked DNA replication forks via replication fork reversal (RFR). RuvA specifically binds to HJ cruciform DNA, conferring on it an open structure. The RuvB hexamer acts as an ATP-dependent pump, pulling dsDNA into and through the RuvAB complex. HJ branch migration allows RuvC to scan DNA until it finds its consensus sequence, where it cleaves and resolves the cruciform DNA. This is Holliday junction branch migration complex subunit RuvA from Streptococcus suis (strain 98HAH33).